The sequence spans 333 residues: Biotin synthase (333 aa).

In terms of domain architecture, Radical SAM core spans 54-287; that stretch reads ANHGAIHACS…TKIIKFAAGR (234 aa). [4Fe-4S] cluster contacts are provided by cysteine 72, cysteine 76, and cysteine 79. [2Fe-2S] cluster is bound by residues cysteine 151, cysteine 212, and lysine 282.

The protein belongs to the radical SAM superfamily. Biotin synthase family. Homodimer. Requires [4Fe-4S] cluster as cofactor. [2Fe-2S] cluster serves as cofactor.

The enzyme catalyses (4R,5S)-dethiobiotin + (sulfur carrier)-SH + 2 reduced [2Fe-2S]-[ferredoxin] + 2 S-adenosyl-L-methionine = (sulfur carrier)-H + biotin + 2 5'-deoxyadenosine + 2 L-methionine + 2 oxidized [2Fe-2S]-[ferredoxin]. It participates in cofactor biosynthesis; biotin biosynthesis; biotin from 7,8-diaminononanoate: step 2/2. Functionally, catalyzes the conversion of dethiobiotin (DTB) to biotin by the insertion of a sulfur atom into dethiobiotin via a radical-based mechanism. The protein is Biotin synthase of Chlorobaculum tepidum (strain ATCC 49652 / DSM 12025 / NBRC 103806 / TLS) (Chlorobium tepidum).